The chain runs to 73 residues: Large ribosomal subunit protein bL31 (73 aa).

Residues Cys16, Cys18, Cys36, and Cys39 each coordinate Zn(2+).

The protein belongs to the bacterial ribosomal protein bL31 family. Type A subfamily. In terms of assembly, part of the 50S ribosomal subunit. The cofactor is Zn(2+).

Its function is as follows. Binds the 23S rRNA. In Desulfosudis oleivorans (strain DSM 6200 / JCM 39069 / Hxd3) (Desulfococcus oleovorans), this protein is Large ribosomal subunit protein bL31.